The chain runs to 423 residues: Lipase member M (423 aa).

The first 33 residues, 1-33, serve as a signal peptide directing secretion; that stretch reads MLETLSRQWIVSHRMEMWLLILVAYMFQRNVNS. Asparagine 48 carries an N-linked (GlcNAc...) asparagine glycan. Positions 92 to 392 constitute an AB hydrolase-1 domain; the sequence is PVVLLQHGLV…EWAHVDFIWG (301 aa). The active-site Nucleophile is serine 186. A disulfide bridge connects residues cysteine 260 and cysteine 269. Active-site charge relay system residues include aspartate 357 and histidine 386.

It belongs to the AB hydrolase superfamily. Lipase family. As to expression, exclusively expressed in the epidermis within the granular keratinocytes.

The protein localises to the secreted. Plays a highly specific role in the last step of keratinocyte differentiation. May have an essential function in lipid metabolism of the most differentiated epidermal layers. The chain is Lipase member M (LIPM) from Homo sapiens (Human).